The primary structure comprises 493 residues: 3-octaprenyl-4-hydroxybenzoate carboxy-lyase (493 aa).

Asn172 contributes to the Mn(2+) binding site. Prenylated FMN contacts are provided by residues 175-177, 189-191, and 194-195; these read IYR, RWL, and RG. Glu238 serves as a coordination point for Mn(2+). The active-site Proton donor is Asp287.

Belongs to the UbiD family. Homohexamer. Requires prenylated FMN as cofactor. Mn(2+) serves as cofactor.

The protein resides in the cell membrane. The catalysed reaction is a 4-hydroxy-3-(all-trans-polyprenyl)benzoate + H(+) = a 2-(all-trans-polyprenyl)phenol + CO2. It functions in the pathway cofactor biosynthesis; ubiquinone biosynthesis. Functionally, catalyzes the decarboxylation of 3-octaprenyl-4-hydroxy benzoate to 2-octaprenylphenol, an intermediate step in ubiquinone biosynthesis. This is 3-octaprenyl-4-hydroxybenzoate carboxy-lyase from Shewanella piezotolerans (strain WP3 / JCM 13877).